A 197-amino-acid polypeptide reads, in one-letter code: MRIGLTGGIASGKSLVATYLEKQGIPVVDADKLARQVVEPGEPALAQIVATFGEHVLQDDGTLDRKQLGAIIFGDEQKRKQLNEIVHPAVRQSMKKQADLYEQRGYTRVVLDIPLLYESNLFHMVNQVWLVYVDEATQLRRLIERDGLTETEAKQRIAAQMPLTAKKAQADVLIDNNGTKENTYRQVYDALAKTAHE.

Positions 2–197 constitute a DPCK domain; it reads RIGLTGGIAS…YDALAKTAHE (196 aa). Residue 10–15 coordinates ATP; sequence ASGKSL.

This sequence belongs to the CoaE family.

It is found in the cytoplasm. It catalyses the reaction 3'-dephospho-CoA + ATP = ADP + CoA + H(+). The protein operates within cofactor biosynthesis; coenzyme A biosynthesis; CoA from (R)-pantothenate: step 5/5. Its function is as follows. Catalyzes the phosphorylation of the 3'-hydroxyl group of dephosphocoenzyme A to form coenzyme A. This chain is Dephospho-CoA kinase, found in Shouchella clausii (strain KSM-K16) (Alkalihalobacillus clausii).